The sequence spans 212 residues: uncharacterized protein (212 aa).

Disordered stretches follow at residues 1-148 (MEKD…LNDL) and 168-190 (EVVT…LSED). Basic and acidic residues predominate over residues 61 to 70 (KELESEDQGK). The span at 71–85 (DPSSNAEDASCQKNL) shows a compositional bias: polar residues. Composition is skewed to basic and acidic residues over residues 99–115 (LGHE…KSDL), 124–144 (EGEH…ESIK), and 168–180 (EVVT…EKPS).

This is an uncharacterized protein from Homo sapiens (Human).